A 684-amino-acid polypeptide reads, in one-letter code: Suppressor of presenilin protein 3 (684 aa).

C2H2-type zinc fingers lie at residues 21-43, 48-71, 123-145, 261-283, and 291-313; these read YKCHLCGQCFYRGCGLASHLRRH, FDCEHCAYTCKHKYAYDRHLLQSH, YKCPLCISTFGSHARAVYHILSH, YLCRNCPYVSWNVSSLWRHFRHH, and WTCIACSYSSSSRVKIDLHVKMH. 3 disordered regions span residues 337–359, 419–440, and 469–501; these read DLNKPTNKKKKPDGGNGSNHSDM, KNNSNPTVLPNKRNSIKTSKSD, and TSKFYRPESPDSLASNNSAHGDEIESTSSDQFQ. 2 C2H2-type zinc fingers span residues 590-612 and 618-641; these read RECTDCPFKHNDLQQFRLHRDKH and HTCPECNYSSNNHNQVVEHTFVDH. The tract at residues 652–684 is disordered; that stretch reads LPSSDSEDDNIPVPPDTPQRKKKAPKRGKRRGW. A compositionally biased stretch (basic residues) spans 671-684; the sequence is RKKKAPKRGKRRGW.

The protein resides in the nucleus. Functionally, probable transcriptional regulator, which participates in the transcriptional repression of the presenilin protein hop-1. This Caenorhabditis elegans protein is Suppressor of presenilin protein 3 (spr-3).